Here is a 220-residue protein sequence, read N- to C-terminus: Ribosome maturation factor RimP (220 aa).

The span at 1-15 (MSQRGRATRPTGPTG) shows a compositional bias: low complexity. Disordered regions lie at residues 1-35 (MSQR…GGDL) and 184-220 (PGRV…GEER). Positions 198–220 (DGADGADEAGDFDDDDDVEGEER) are enriched in acidic residues.

This sequence belongs to the RimP family.

It localises to the cytoplasm. Required for maturation of 30S ribosomal subunits. This Salinispora tropica (strain ATCC BAA-916 / DSM 44818 / JCM 13857 / NBRC 105044 / CNB-440) protein is Ribosome maturation factor RimP.